We begin with the raw amino-acid sequence, 259 residues long: Gasdermin bGSDM (259 aa).

Cys-3 is lipidated: S-palmitoyl cysteine. The next 4 beta stranded transmembrane spans lie at 70–86, 98–116, 162–179, and 187–203; these read FQFRASSILQVGVAASV, SGSFSSAFSSSNADTIQLS, GIRISVADKSKKQVDLSA, and AKAKMELKREDTGSYAF. The interval 244–259 is C-terminal region; the sequence is PFAFIGDDAFVDLPES.

Belongs to the bacterial gasdermin family. As to quaternary structure, monomer in solution. Forms large, homooligomeric ring-shaped pores when inserted in membranes. Post-translationally, palmitoylation helps stabilize the inactive state; may self palmitoylate. Palmitoylation plays a significant role in pore formation.

Its subcellular location is the cytoplasm. It localises to the cell inner membrane. Its activity is regulated as follows. The full-length protein before cleavage is inactive: intramolecular interactions between the N-terminal domain and the C-terminal region as well as the lipid modification, mediate autoinhibition. The pyroptosis-like-inducing activity is carried by the released N-terminal domain (Gasdermin bGSDM, N-terminus). In terms of biological role, precursor of a pore-forming protein involved in defense against bacteriophages. Expression of bGSDM and the neighboring protease gene (Ga0098714_109514) is toxic in E.coli on solid medium. Cleavage of this precursor by its dedicated protease releases the active moiety (gasdermin bGSDM, N-terminus) which inserts into membranes, forming pores and triggering cell death. Pore-forming protein that causes membrane permeabilization via a pyroptosis-like activity. Makes ring-like pores when released. The polypeptide is Gasdermin bGSDM (Bradyrhizobium tropiciagri).